The primary structure comprises 574 residues: E3 ubiquitin-protein ligase TRIM23 (574 aa).

An RING-type; degenerate zinc finger spans residues 31 to 76; that stretch reads CGVCEDVFSLQGDKVPRLLLCGHTVCHDCLTRLPLHGRAIRCPFDR. The segment at 122–168 adopts a B box-type; degenerate zinc-finger fold; that stretch reads ESIIRCDEDEAHVASVYCTVCATHLCSDCSQVTHSTKTLAKHRRVPL. A coiled-coil region spans residues 352–379; that stretch reads RVVLAKQEITRLLETLQKQQQQFTEVAD. Residues 390 to 574 are ARF-like; the sequence is TFTKDNRVHI…LVAAGVLDVA (185 aa). GTP contacts are provided by residues 411-418, 454-458, and 513-516; these read GLDGAGKT, DVGGK, and NKQD.

It in the C-terminal section; belongs to the small GTPase superfamily. Arf family. Homodimer. Interacts with PSCD1. Interacts with UBE2D2. Interacts with TBK1 (via N-terminal kinase domain) and p62/SQSTM1.

The protein localises to the cytoplasm. Its subcellular location is the endomembrane system. The protein resides in the golgi apparatus membrane. It localises to the lysosome membrane. The enzyme catalyses S-ubiquitinyl-[E2 ubiquitin-conjugating enzyme]-L-cysteine + [acceptor protein]-L-lysine = [E2 ubiquitin-conjugating enzyme]-L-cysteine + N(6)-ubiquitinyl-[acceptor protein]-L-lysine.. It functions in the pathway protein modification; protein ubiquitination. In terms of biological role, acts as an E3 ubiquitin-protein ligase. Plays an essential role in autophagy activation during viral infection. Mechanistically, activates TANK-binding kinase 1/TBK1 by facilitating its dimerization and ability to phosphorylate the selective autophagy receptor SQSTM1. In order to achieve this function, TRIM23 mediates 'Lys-27'-linked auto-ubiquitination of its ADP-ribosylation factor (ARF) domain to induce its GTPase activity and its recruitment to autophagosomes. This chain is E3 ubiquitin-protein ligase TRIM23 (Trim23), found in Mus musculus (Mouse).